We begin with the raw amino-acid sequence, 558 residues long: MSIVLFLIVFILLSLIVSRYLYSVALNVPSKIDVVFNPIEKLIYRLIGTNLEHMSGKTYIKHFLLFNGLMGGLSFVLLLIQQWLFLNPNHNLNQSVSLAFNTMASFLTNTNLQHYAGETGLSYLTQMCVITFLMFTSAASGYAVCIAMLRRLTGMTDVIGNFYQDITRFIVRVLIPFALIISLFLISQGTPQTLKGNLVIETLSGVKQTIAYGPMASLESIKHLGTNGGGFLGANSSTPFENPTYWSNYAEALSMMLIPGSLVFLFGRMLKTKQQIHPHAIMIFVAMFVMFIGFLVTCLYFEFAGNPELHHLGIAGGNMEGKETRFGIGLSALFTTITTAFTTGTVNNMHDSLTPLGGMVPMVLMMLNAVFGGEGVGLMNMLIYVMLTVFICSLMIGKTPSYLGMKIEGKEMKLIALSFLVHPLLILVFSALAFIVPGASDALTNPQFHGVSQVLYEFTSSSANNGSGFEGLGDNTVFWNISTGIVMLLARYIPIVLQILIVSSLVNKKTYQQHTQDVPINNLFFSSVLIIFIILLSGLTFLPDLMLGPIGEQLLLHV.

12 helical membrane passes run 1 to 21, 60 to 80, 129 to 149, 169 to 189, 246 to 266, 281 to 301, 326 to 346, 353 to 373, 376 to 396, 415 to 435, 485 to 505, and 523 to 543; these read MSIVLFLIVFILLSLIVSRYL, IKHFLLFNGLMGGLSFVLLLI, VITFLMFTSAASGYAVCIAML, FIVRVLIPFALIISLFLISQG, WSNYAEALSMMLIPGSLVFLF, IMIFVAMFVMFIGFLVTCLYF, FGIGLSALFTTITTAFTTGTV, LTPLGGMVPMVLMMLNAVFGG, VGLMNMLIYVMLTVFICSLMI, IALSFLVHPLLILVFSALAFI, IVMLLARYIPIVLQILIVSSL, and LFFSSVLIIFIILLSGLTFLP.

Belongs to the KdpA family. In terms of assembly, the system is composed of three essential subunits: KdpA, KdpB and KdpC.

The protein localises to the cell membrane. In terms of biological role, part of the high-affinity ATP-driven potassium transport (or Kdp) system, which catalyzes the hydrolysis of ATP coupled with the electrogenic transport of potassium into the cytoplasm. This subunit binds the extracellular potassium ions and delivers the ions to the membrane domain of KdpB through an intramembrane tunnel. This Staphylococcus haemolyticus (strain JCSC1435) protein is Potassium-transporting ATPase potassium-binding subunit.